The chain runs to 828 residues: Phenylalanine--tRNA ligase beta subunit (828 aa).

The tRNA-binding domain occupies 44–155; it reads GPVDGPLTVG…GTAEPGADGA (112 aa). The B5 domain occupies 411–486; that stretch reads WSPPAIQMPA…RLEGLEVIGS (76 aa). The Mg(2+) site is built by aspartate 464, aspartate 470, glutamate 473, and glutamate 474. The region spanning 734 to 827 is the FDX-ACB domain; it reads SPFPAVFQDV…AAEAVGAELR (94 aa).

This sequence belongs to the phenylalanyl-tRNA synthetase beta subunit family. Type 1 subfamily. In terms of assembly, tetramer of two alpha and two beta subunits. Requires Mg(2+) as cofactor.

It localises to the cytoplasm. It catalyses the reaction tRNA(Phe) + L-phenylalanine + ATP = L-phenylalanyl-tRNA(Phe) + AMP + diphosphate + H(+). The sequence is that of Phenylalanine--tRNA ligase beta subunit from Mycolicibacterium paratuberculosis (strain ATCC BAA-968 / K-10) (Mycobacterium paratuberculosis).